The sequence spans 238 residues: Ribonuclease PH (238 aa).

Phosphate-binding positions include R86 and G124 to R126.

It belongs to the RNase PH family. In terms of assembly, homohexameric ring arranged as a trimer of dimers.

The enzyme catalyses tRNA(n+1) + phosphate = tRNA(n) + a ribonucleoside 5'-diphosphate. Phosphorolytic 3'-5' exoribonuclease that plays an important role in tRNA 3'-end maturation. Removes nucleotide residues following the 3'-CCA terminus of tRNAs; can also add nucleotides to the ends of RNA molecules by using nucleoside diphosphates as substrates, but this may not be physiologically important. Probably plays a role in initiation of 16S rRNA degradation (leading to ribosome degradation) during starvation. The sequence is that of Ribonuclease PH from Phenylobacterium zucineum (strain HLK1).